A 627-amino-acid chain; its full sequence is uncharacterized protein (627 aa).

2 disordered regions span residues 141–187 and 490–510; these read LRYP…TPPS and ENENTNGSANNSTYTNGGPRT. Residues 491-510 show a composition bias toward polar residues; that stretch reads NENTNGSANNSTYTNGGPRT. Position 559 is a phosphoserine (serine 559).

This is an uncharacterized protein from Saccharomyces cerevisiae (strain ATCC 204508 / S288c) (Baker's yeast).